The following is a 264-amino-acid chain: Thiazole synthase (264 aa).

Lys106 functions as the Schiff-base intermediate with DXP in the catalytic mechanism. 1-deoxy-D-xylulose 5-phosphate-binding positions include Gly167, 193-194, and 215-216; these read AG and NS.

The protein belongs to the ThiG family. Homotetramer. Forms heterodimers with either ThiH or ThiS.

The protein localises to the cytoplasm. It carries out the reaction [ThiS sulfur-carrier protein]-C-terminal-Gly-aminoethanethioate + 2-iminoacetate + 1-deoxy-D-xylulose 5-phosphate = [ThiS sulfur-carrier protein]-C-terminal Gly-Gly + 2-[(2R,5Z)-2-carboxy-4-methylthiazol-5(2H)-ylidene]ethyl phosphate + 2 H2O + H(+). Its pathway is cofactor biosynthesis; thiamine diphosphate biosynthesis. Catalyzes the rearrangement of 1-deoxy-D-xylulose 5-phosphate (DXP) to produce the thiazole phosphate moiety of thiamine. Sulfur is provided by the thiocarboxylate moiety of the carrier protein ThiS. In vitro, sulfur can be provided by H(2)S. This is Thiazole synthase from Pseudomonas fluorescens (strain SBW25).